The chain runs to 337 residues: DNA-directed RNA polymerase subunit alpha (337 aa).

An alpha N-terminal domain (alpha-NTD) region spans residues 1-233 (MIQKNWQELI…DQLSIFVNFE (233 aa)). An alpha C-terminal domain (alpha-CTD) region spans residues 249-337 (FNPVLLKKVD…DLAKRYEDQY (89 aa)).

The protein belongs to the RNA polymerase alpha chain family. As to quaternary structure, homodimer. The RNAP catalytic core consists of 2 alpha, 1 beta, 1 beta' and 1 omega subunit. When a sigma factor is associated with the core the holoenzyme is formed, which can initiate transcription.

The enzyme catalyses RNA(n) + a ribonucleoside 5'-triphosphate = RNA(n+1) + diphosphate. Functionally, DNA-dependent RNA polymerase catalyzes the transcription of DNA into RNA using the four ribonucleoside triphosphates as substrates. This Brucella canis (strain ATCC 23365 / NCTC 10854 / RM-666) protein is DNA-directed RNA polymerase subunit alpha.